A 1732-amino-acid chain; its full sequence is Transient receptor potential cation channel subfamily M member 3 (1732 aa).

Topologically, residues 1 to 894 (MPEPWGTVYF…RKIYEFYNAP (894 aa)) are cytoplasmic. Calmodulin-binding stretches follow at residues 192–215 (NFELQPKLKQVFGKGLIKAAMTTG), 300–323 (TGKYGAEVKLRRQLEKHISLQKIN), 601–624 (RKRFRTLYHNLFGPKRPKALKLLG), and 793–816 (RKNSGLKVILGILLPPSILSLEFK). Residues 617 to 625 (PKALKLLGM) are required for the inhibitory action of G-beta/gamma-subunits of heterotrimeric G-proteins. Ser796 contributes to the 1,2-dioctanoyl-sn-glycero-3-phospho-(1D-myo-inositol-4,5-bisphosphate) binding site. A helical transmembrane segment spans residues 895–918 (IVKFWFYTLAYIGYLMLFNYIVLV). Residues 919-925 (KMERWPS) lie on the Extracellular side of the membrane. Residues 926 to 948 (TQEWIVISYIFTLGIEKMREILM) traverse the membrane as a helical segment. Over 949 to 964 (SEPGKLLQKVKVWLQE) the chain is Cytoplasmic. A helical membrane pass occupies residues 965–985 (YWNVTDLIAILLFSVGMILRL). Over 986–989 (QDQP) the chain is Extracellular. The helical transmembrane segment at 990–1013 (FRSDGRVIYCVNIIYWYIRLLDIF) threads the bilayer. Residues 1014-1028 (GVNKYLGPYVMMIGK) are Cytoplasmic-facing. 1,2-dioctanoyl-sn-glycero-3-phospho-(1D-myo-inositol-4,5-bisphosphate) is bound by residues Lys1017 and Tyr1018. A helical membrane pass occupies residues 1029–1056 (MMIDMMYFVIIMLVVLMSFGVARQAILF). The Extracellular segment spans residues 1057–1111 (PNEEPSWKLAKNIFYMPYWMIYGEVFADQIDPPCGQNETREDGKIIQLPPCKTGA). A helical transmembrane segment spans residues 1112 to 1137 (WIVPAIMACYLLVANILLVNLLIAVF). Topologically, residues 1138-1732 (NNTFFEVKSI…AFQSFESKHN (595 aa)) are cytoplasmic. Residues 1241-1301 (ERIRVTSERV…LERLTGLERA (61 aa)) adopt a coiled-coil conformation. The segment covering 1459 to 1476 (PVPSTAPSSSAYATLAPT) has biased composition (low complexity). Disordered stretches follow at residues 1459–1478 (PVPSTAPSSSAYATLAPTDR) and 1611–1732 (REAE…SKHN). Composition is skewed to polar residues over residues 1635–1653 (AISSQEGDNSERTLSNNIT), 1690–1701 (NTASLRNPFQRS), and 1720–1732 (RTSAFQSFESKHN).

The protein belongs to the transient receptor (TC 1.A.4) family. LTrpC subfamily. TRPM3 sub-subfamily. In terms of assembly, homotetramer. Interacts with TRPM1; the interaction results in the formation of a heteromultimeric cation channel complex that are functionally different from the homomeric channels. As to expression, expressed primarily in the kidney and, at lower levels, in brain, testis, ovary, pancreas and spinal cord. Expression in the brain and kidney was determined at protein level. In the kidney, expressed predominantly in the collecting tubular epithelium in the medulla, medullary rays, and periglomerular regions; in the brain, highest levels are found in the cerebellum, choroid plexus, the locus coeruleus, the posterior thalamus and the substantia nigra. Down-regulated in renal tumors compared to normal kidney. Expressed in the lens.

The protein localises to the cell membrane. It catalyses the reaction Ca(2+)(in) = Ca(2+)(out). The enzyme catalyses Mn(2+)(in) = Mn(2+)(out). It carries out the reaction Zn(2+)(in) = Zn(2+)(out). The catalysed reaction is Mg(2+)(in) = Mg(2+)(out). Its activity is regulated as follows. Activated by the neurosteroid pregnelonone sulfate (PregS); PregS activates the channel by shifting its current-voltage activation curve toward more negative membrane potentials and also potentiates temperature-induced activation. Activated by sphingosine. Activated by heat. Intracellular Ca(2+) inhibits TRPM3 probably via interaction with Ca(2+)/calmodulin. Intracellular Mg(2+) inhibits TRPM3 activity. Both intracellular and extracellular protons block TRPM3 through propable binding sites in the pore region. Positively regulated by phosphoinositide phosphoinositol 4,5-biphosphate (PI(4,5)P2). Strongly inhibited by activation of G(i)-coupled receptors via direct binding with G-betagamma-subunits of heterotrimeric G-proteins. In terms of biological role, constitutively active, non-selective divalent cation-conducting channel that is permeable to Ca(2+), Mn(2+), and Mg(2+), with a high permeability for Ca(2+). However, can be enhanced by increasing temperature and by ligands, including the endogenous neurosteroid pregnenolone sulfate and sphingosine-1 and suppressed by intracellular Mg(2+). Implicated in a variety of cellular processes, including insulin/peptide secretion, vascular constriction and dilation, noxious heat sensing, inflammatory and spontaneous pain sensitivity. In neurons of the dorsal root ganglia, functions as thermosensitive channel for the detection of noxious heat and spontaneous pain. Suggested to function as an ionotropic steroid receptor in beta-cell, indeed pregnenolone sulfate leads to Ca(2+) influx and enhanced insulin secretion. Mediates Zn(2+) uptake into the lumen of pancreatic beta cell secretory granules, thereby regulating insulin secretion. Forms heteromultimeric ion channels with TRPM1 which are permeable for Ca(2+) and Zn(2+) ions. Exists as multiple splice variants which differ significantly in their biophysical properties. In Homo sapiens (Human), this protein is Transient receptor potential cation channel subfamily M member 3.